The primary structure comprises 466 residues: 3-isopropylmalate dehydratase large subunit (466 aa).

The [4Fe-4S] cluster site is built by Cys347, Cys407, and Cys410.

The protein belongs to the aconitase/IPM isomerase family. LeuC type 1 subfamily. Heterodimer of LeuC and LeuD. [4Fe-4S] cluster serves as cofactor.

It carries out the reaction (2R,3S)-3-isopropylmalate = (2S)-2-isopropylmalate. It participates in amino-acid biosynthesis; L-leucine biosynthesis; L-leucine from 3-methyl-2-oxobutanoate: step 2/4. Catalyzes the isomerization between 2-isopropylmalate and 3-isopropylmalate, via the formation of 2-isopropylmaleate. The protein is 3-isopropylmalate dehydratase large subunit of Shewanella halifaxensis (strain HAW-EB4).